We begin with the raw amino-acid sequence, 60 residues long: Large ribosomal subunit protein bL32 (60 aa).

The tract at residues 1-22 (MAVPARHTSKAKKNKRRTHYKL) is disordered. The segment covering 7-20 (HTSKAKKNKRRTHY) has biased composition (basic residues).

Belongs to the bacterial ribosomal protein bL32 family.

The chain is Large ribosomal subunit protein bL32 from Streptococcus pyogenes serotype M3 (strain ATCC BAA-595 / MGAS315).